Here is a 417-residue protein sequence, read N- to C-terminus: Serine--tRNA ligase (417 aa).

Residue 226–228 coordinates L-serine; sequence TSE. ATP is bound by residues 257-259 and V273; that span reads RRE. E280 lines the L-serine pocket. 344 to 347 lines the ATP pocket; that stretch reads ELTS. T379 is an L-serine binding site.

It belongs to the class-II aminoacyl-tRNA synthetase family. Type-1 seryl-tRNA synthetase subfamily. In terms of assembly, homodimer. The tRNA molecule binds across the dimer.

It localises to the cytoplasm. The enzyme catalyses tRNA(Ser) + L-serine + ATP = L-seryl-tRNA(Ser) + AMP + diphosphate + H(+). It carries out the reaction tRNA(Sec) + L-serine + ATP = L-seryl-tRNA(Sec) + AMP + diphosphate + H(+). The protein operates within aminoacyl-tRNA biosynthesis; selenocysteinyl-tRNA(Sec) biosynthesis; L-seryl-tRNA(Sec) from L-serine and tRNA(Sec): step 1/1. In terms of biological role, catalyzes the attachment of serine to tRNA(Ser). Is also able to aminoacylate tRNA(Sec) with serine, to form the misacylated tRNA L-seryl-tRNA(Sec), which will be further converted into selenocysteinyl-tRNA(Sec). The polypeptide is Serine--tRNA ligase (Mycolicibacterium smegmatis (strain ATCC 700084 / mc(2)155) (Mycobacterium smegmatis)).